The sequence spans 213 residues: Amelogenin, X isoform (213 aa).

Positions 1 to 16 are cleaved as a signal peptide; sequence MGTWILFACLLGAAFS. Serine 32 is modified (phosphoserine). Low complexity-rich tracts occupy residues 96–105 and 114–160; these read VPQQPMMPVP and QHHQ…QPLQ. The segment at 96 to 213 is disordered; that stretch reads VPQQPMMPVP…TDKTKREEVD (118 aa). Residues 161–194 show a composition bias toward pro residues; it reads PLQPQPPVHPIQPLPPQPPLPPIFPMQPLPPMLP.

This sequence belongs to the amelogenin family. In terms of assembly, interacts with KRT5. In terms of processing, phosphorylated by FAM20C in vitro.

The protein localises to the secreted. It localises to the extracellular space. The protein resides in the extracellular matrix. In terms of biological role, plays a role in the biomineralization of teeth. Seems to regulate the formation of crystallites during the secretory stage of tooth enamel development. Thought to play a major role in the structural organization and mineralization of developing enamel. The polypeptide is Amelogenin, X isoform (AMELX) (Bos taurus (Bovine)).